The chain runs to 333 residues: Glycerol-3-phosphate dehydrogenase [NAD(P)+] (333 aa).

NADPH-binding residues include tryptophan 15 and lysine 108. Positions 108, 136, and 138 each coordinate sn-glycerol 3-phosphate. Residue alanine 140 coordinates NADPH. Sn-glycerol 3-phosphate is bound by residues lysine 191, aspartate 244, serine 254, arginine 255, and asparagine 256. The active-site Proton acceptor is the lysine 191. Arginine 255 is an NADPH binding site. NADPH contacts are provided by valine 279 and glutamate 281.

This sequence belongs to the NAD-dependent glycerol-3-phosphate dehydrogenase family.

It localises to the cytoplasm. It catalyses the reaction sn-glycerol 3-phosphate + NAD(+) = dihydroxyacetone phosphate + NADH + H(+). The catalysed reaction is sn-glycerol 3-phosphate + NADP(+) = dihydroxyacetone phosphate + NADPH + H(+). It functions in the pathway membrane lipid metabolism; glycerophospholipid metabolism. Functionally, catalyzes the reduction of the glycolytic intermediate dihydroxyacetone phosphate (DHAP) to sn-glycerol 3-phosphate (G3P), the key precursor for phospholipid synthesis. This chain is Glycerol-3-phosphate dehydrogenase [NAD(P)+], found in Maricaulis maris (strain MCS10) (Caulobacter maris).